Consider the following 311-residue polypeptide: Heme A synthase (311 aa).

Residues Met1–Lys6 are Cytoplasmic-facing. The helical transmembrane segment at Trp7–Thr27 threads the bilayer. Over Lys28 to Arg62 the chain is Extracellular. The cysteines at positions 35 and 42 are disulfide-linked. Residue Glu58 is part of the active site. Residue His61 participates in heme o binding. Residues Leu63–Tyr83 form a helical membrane-spanning segment. Over Lys84–Thr91 the chain is Cytoplasmic. Residues Leu92–Val112 form a helical membrane-spanning segment. The Extracellular portion of the chain corresponds to Trp113 to Ala121. Residues Ile122–Phe142 form a helical membrane-spanning segment. Residue His123 coordinates heme o. Over Glu143 to Met159 the chain is Cytoplasmic. The chain crosses the membrane as a helical span at residues Lys160–Val180. The Extracellular portion of the chain corresponds to Arg181 to Met211. A disulfide bridge connects residues Cys189 and Cys195. A helical transmembrane segment spans residues Gly212 to Ile232. Residue His213 coordinates heme b. Over Arg233–Trp243 the chain is Cytoplasmic. A helical membrane pass occupies residues Gly244 to Phe264. Topologically, residues Thr265–Met271 are extracellular. Residues Ala272–Leu292 form a helical membrane-spanning segment. His275 contributes to the heme b binding site. Residues Gly293–Lys311 are Cytoplasmic-facing.

Belongs to the COX15/CtaA family. Type 1 subfamily. As to quaternary structure, interacts with CtaB. Heme b is required as a cofactor.

The protein resides in the cell membrane. The enzyme catalyses Fe(II)-heme o + 2 A + H2O = Fe(II)-heme a + 2 AH2. It participates in porphyrin-containing compound metabolism; heme A biosynthesis; heme A from heme O: step 1/1. In terms of biological role, catalyzes the conversion of heme O to heme A by two successive hydroxylations of the methyl group at C8. The first hydroxylation forms heme I, the second hydroxylation results in an unstable dihydroxymethyl group, which spontaneously dehydrates, resulting in the formyl group of heme A. The polypeptide is Heme A synthase (Bacillus cereus (strain ATCC 14579 / DSM 31 / CCUG 7414 / JCM 2152 / NBRC 15305 / NCIMB 9373 / NCTC 2599 / NRRL B-3711)).